Here is a 545-residue protein sequence, read N- to C-terminus: G-protein coupled receptor 161 (545 aa).

The Extracellular portion of the chain corresponds to 1 to 46; the sequence is MDFVQHALLTASRGALTMSLNSSLSYRKELSNLTATEGGEGGAVSE. N-linked (GlcNAc...) asparagine glycosylation is found at asparagine 21 and asparagine 32. The chain crosses the membrane as a helical span at residues 47–67; that stretch reads FIAIIIITVLVCLGNLVIVVT. Topologically, residues 68 to 80 are cytoplasmic; it reads LYKKSYLLTLSNK. A helical membrane pass occupies residues 81-101; it reads FVFSLTLSNFLLSVLVLPFVV. Residues 102 to 117 are Extracellular-facing; sequence TSSIRREWIFGVVWCN. Cysteines 116 and 194 form a disulfide. Residue asparagine 117 is glycosylated (N-linked (GlcNAc...) asparagine). The helical transmembrane segment at 118-139 threads the bilayer; it reads FSALLYLLISSASMLTLGVIAI. The Cytoplasmic segment spans residues 140-159; it reads DRYYAVLYPMVYPMKITGNR. The helical transmembrane segment at 160-180 threads the bilayer; it reads AVMALVYIWLHSLIGCLPPLF. Residues 181–205 lie on the Extracellular side of the membrane; that stretch reads GWSSVEFDEFKWMCVAAWHQEPGYT. The helical transmembrane segment at 206-226 threads the bilayer; it reads IFWQIWCALFPFLIMLVCYGF. The Cytoplasmic segment spans residues 227-285; sequence IFRVARVKARKVHCGTVVTVEEDSQRSGRKNSSTSTSSSGSRRNALQGVVYSANQCKAL. The helical transmembrane segment at 286 to 306 threads the bilayer; the sequence is ITILVVIGAFMVTWGPYMVVI. The Extracellular segment spans residues 307–322; the sequence is TSEALWGKNCVSPTLE. The chain crosses the membrane as a helical span at residues 323–343; sequence TWATWLSFTSAICHPLIYGLW. Topologically, residues 344-545 are cytoplasmic; sequence NKTVRKELLG…EGNVLAAEQR (202 aa).

It belongs to the G-protein coupled receptor 1 family.

It is found in the cell projection. It localises to the cilium membrane. Its subcellular location is the cell membrane. Key negative regulator of Shh signaling, which promotes the processing of GLI3 into GLI3R during neural tube development. Recruited by TULP3 and the IFT-A complex to primary cilia and acts as a regulator of the PKA-dependent basal repression machinery in Shh signaling by increasing cAMP levels, leading to promote the PKA-dependent processing of GLI3 into GLI3R and repress the Shh signaling. In presence of SHH, it is removed from primary cilia and is internalized into recycling endosomes, preventing its activity and allowing activation of the Shh signaling. Its ligand is unknown. The protein is G-protein coupled receptor 161 (Gpr161) of Mus musculus (Mouse).